The primary structure comprises 245 residues: Small ribosomal subunit protein uS2 (245 aa).

Belongs to the universal ribosomal protein uS2 family.

The sequence is that of Small ribosomal subunit protein uS2 from Pseudomonas fluorescens (strain ATCC BAA-477 / NRRL B-23932 / Pf-5).